Consider the following 478-residue polypeptide: MSQLLTARQAEELHKAMIAYLLSANLPKSAAALREELADSVQLDDSTAKKYEGLLEKKWTSVVRLQKKIMDLESRNNALQSELDSATPTSLARRNQDPVSWLPHAPARHILQSHREPVTCVGFHPVFSSLASGSDDTTIKIWDWELGELERTIKGHTKAVLDVDYGGPRGGTLLASCSSDLTIKLWDPSDGYKNIRTLPGHDHSVSAVRFIPSGAAGSPLSGNLLVSASRDKTLRIWDVTTGYCVKTLRGHVDWVRDVAASPDGRFLFSAGNDQVARLWDVSSGETKSTFLGHEHAVECVAFAPPTSYPHLSALAGLKKAPPSSSSAEYVATGSRDKSIRIWDARGTLIKTLIGHDNWVRALAFHPGGKYLLSVSDDKTLRCWDLTQECKCVRTVKDAHGHFISCIRWAPNIIKDAGVVNGDDTSTAASANGGALAASAINGVVPTGKKEDPGGGPMMGIRCVIATGSVDLKVRVFAS.

Residues 9–41 form the LisH domain; the sequence is QAEELHKAMIAYLLSANLPKSAAALREELADSV. Residues 60–87 adopt a coiled-coil conformation; that stretch reads TSVVRLQKKIMDLESRNNALQSELDSAT. WD repeat units lie at residues 113–154, 156–196, 200–247, 250–289, 292–352, 354–393, 398–439, and 440–477; these read SHRE…RTIK, HTKA…KNIR, GHDH…CVKT, GHVDWVRDVAASPDGRFLFSAGNDQVARLWDVSSGETKST, GHEH…IKTL, GHDNWVRALAFHPGGKYLLSVSDDKTLRCWDLTQECKCVR, AHGH…AASA, and INGVVPTGKKEDPGGGPMMGIRCVIATGSVDLKVRVFA.

It belongs to the WD repeat LIS1/nudF family. As to quaternary structure, self-associates. Interacts with NDL1 and dynein.

It is found in the cytoplasm. The protein resides in the cytoskeleton. Its subcellular location is the spindle pole. In terms of biological role, positively regulates the activity of the minus-end directed microtubule motor protein dynein. May enhance dynein-mediated microtubule sliding by targeting dynein to the microtubule plus end. Required for nuclear migration during vegetative growth as well as development. Required for retrograde early endosome (EE) transport from the hyphal tip. Required for localization of dynein to the mitotic spindle poles. Recruits additional proteins to the dynein complex at SPBs. This is Nuclear distribution protein PAC1 from Paracoccidioides brasiliensis (strain Pb18).